We begin with the raw amino-acid sequence, 268 residues long: Undecaprenyl-diphosphatase (268 aa).

Helical transmembrane passes span 4–24 (STTLVALVLGLLEGLTEFIPV), 50–70 (IQLGAVLAVLTVYASKLISVI), 84–104 (AAVLLAFLPAVVVGVMAHGFI), 109–129 (FETPILIAIMLILGGIILLFV), 144–164 (VPLGVALKIGFFQCLAMVPGV), 184–204 (AAEFSFFLSMPTMAGAFAFDL), 214–234 (GALGEIAVGFVAAFLAAVLVV), and 245–265 (GYSLFGWWRIIVGSIALAALL).

It belongs to the UppP family.

It is found in the cell inner membrane. It carries out the reaction di-trans,octa-cis-undecaprenyl diphosphate + H2O = di-trans,octa-cis-undecaprenyl phosphate + phosphate + H(+). Its function is as follows. Catalyzes the dephosphorylation of undecaprenyl diphosphate (UPP). Confers resistance to bacitracin. The sequence is that of Undecaprenyl-diphosphatase from Cereibacter sphaeroides (strain ATCC 17025 / ATH 2.4.3) (Rhodobacter sphaeroides).